The following is a 186-amino-acid chain: UPF0149 protein Pfl01_5435 (186 aa).

The protein belongs to the UPF0149 family.

In Pseudomonas fluorescens (strain Pf0-1), this protein is UPF0149 protein Pfl01_5435.